We begin with the raw amino-acid sequence, 1126 residues long: Probable serine/threonine-protein kinase DDB_G0280111 (1126 aa).

Positions 16–295 (LNFVKQIAEG…NLLRNQQPLF (280 aa)) constitute a Protein kinase domain. Residues 22-30 (IAEGGFSYV) and Lys45 contribute to the ATP site. Asp147 functions as the Proton acceptor in the catalytic mechanism. Residues 314–333 (NNNNNINNNNNNNIVNGKNI) show a composition bias toward low complexity. Disordered regions lie at residues 314–469 (NNNN…NGNN), 760–901 (LNLN…QQQQ), 944–1072 (TPSS…DEVR), and 1095–1126 (NKQS…GLLN). Residues 347–364 (TPTPPPPAPSQSPSPSPS) show a composition bias toward pro residues. Residues 367 to 390 (VVNNIENNSNGLEHSNSNGNISQP) are compositionally biased toward polar residues. Composition is skewed to low complexity over residues 413-422 (PPNNSNNSFD), 432-469 (NLSN…NGNN), and 760-795 (LNLN…LNSS). Composition is skewed to polar residues over residues 796–825 (FDNI…SESG) and 833–845 (EPTS…YQQS). Residues 846-856 (NNNNNNNNNNN) are compositionally biased toward low complexity. Residues 857-866 (GTPISLTPGS) are compositionally biased toward polar residues. 3 stretches are compositionally biased toward low complexity: residues 886–901 (QQQQ…QQQQ), 953–971 (PSTG…QQSQ), and 1003–1035 (NVNI…NPNL). Over residues 1095-1105 (NKQSRMNNPNN) the composition is skewed to polar residues. A compositionally biased stretch (acidic residues) spans 1108-1126 (DEGDSGFGDGEEEDEGLLN).

This sequence belongs to the protein kinase superfamily. Ser/Thr protein kinase family.

The catalysed reaction is L-seryl-[protein] + ATP = O-phospho-L-seryl-[protein] + ADP + H(+). The enzyme catalyses L-threonyl-[protein] + ATP = O-phospho-L-threonyl-[protein] + ADP + H(+). The protein is Probable serine/threonine-protein kinase DDB_G0280111 of Dictyostelium discoideum (Social amoeba).